We begin with the raw amino-acid sequence, 29 residues long: Cytochrome b6-f complex subunit 8 (29 aa).

The helical transmembrane segment at 3–23 (IVSLAWAGLMVVFTFSLSLVV) threads the bilayer.

It belongs to the PetN family. As to quaternary structure, the 4 large subunits of the cytochrome b6-f complex are cytochrome b6, subunit IV (17 kDa polypeptide, PetD), cytochrome f and the Rieske protein, while the 4 small subunits are PetG, PetL, PetM and PetN. The complex functions as a dimer.

It is found in the plastid. Its subcellular location is the chloroplast thylakoid membrane. Its function is as follows. Component of the cytochrome b6-f complex, which mediates electron transfer between photosystem II (PSII) and photosystem I (PSI), cyclic electron flow around PSI, and state transitions. The polypeptide is Cytochrome b6-f complex subunit 8 (Arabis hirsuta (Hairy rock-cress)).